We begin with the raw amino-acid sequence, 469 residues long: MNQFDKKSQAWSALFSEPMSDLVKRYTSSVFFDKRLWQADIAGSLAHADMLAAQSIIAPADHAAIQYGMAQITREIEAGEFEWKLDLEDVHLNIEARLTQLVGDPGKRLHTGRSRNDQVATDVRLWLRGEIDLIGGLLTDLQKALVEIADKNVEVILPGFTHLQVAQPVSFGHHMLAYVEMFSRDAERMLEVRRRVNRLPLGAAALAGTSYPLDRERVATTLGMVDEQGQPQVCQNSLDAVSDRDFAIEFTAAASLAMVHISRFSEELILWMSQNFGFINIADRFTTGSSIMPQKKNPDVPELARGKTGRVVGHLMGLITLMKGQPLAYNKDNQEDKEPLFDTVDTLKDTLRIFAEMVGGITVKPEAMERAALRGYATATDLADYLTKKGLPFRDAHETVAHAVKAATTHQVDLSELPLAVLQEFNPSIEKDVYEVLSLRGSLNARNILGGTAPAQVRAQIARHRARLG.

Belongs to the lyase 1 family. Argininosuccinate lyase subfamily.

The protein localises to the cytoplasm. It catalyses the reaction 2-(N(omega)-L-arginino)succinate = fumarate + L-arginine. Its pathway is amino-acid biosynthesis; L-arginine biosynthesis; L-arginine from L-ornithine and carbamoyl phosphate: step 3/3. This chain is Argininosuccinate lyase, found in Polaromonas naphthalenivorans (strain CJ2).